We begin with the raw amino-acid sequence, 303 residues long: Acidic endochitinase WIN6.2B (303 aa).

An N-terminal signal peptide occupies residues 1-21 (MSVWAFAFFSLFLSLSVRGSA). A Chitin-binding type-1 domain is found at 22-62 (EQCGQQAGDALCPGGLCCSSYGWCGTTADYCGDGCQSQCDG). 4 disulfide bridges follow: Cys-24–Cys-39, Cys-33–Cys-45, Cys-38–Cys-52, and Cys-56–Cys-60. Positions 82 to 303 (DGYLSDIIPE…YGLLGLKDTM (222 aa)) are chitinase. Glu-150 serves as the catalytic Proton donor. Cys-253 and Cys-286 are disulfide-bonded.

The protein belongs to the glycosyl hydrolase 19 family. Chitinase class I subfamily.

The enzyme catalyses Random endo-hydrolysis of N-acetyl-beta-D-glucosaminide (1-&gt;4)-beta-linkages in chitin and chitodextrins.. Functionally, defense against chitin-containing fungal pathogens. In Populus trichocarpa (Western balsam poplar), this protein is Acidic endochitinase WIN6.2B.